Consider the following 216-residue polypeptide: UPF0502 protein Pfl01_3711 (216 aa).

It belongs to the UPF0502 family.

This Pseudomonas fluorescens (strain Pf0-1) protein is UPF0502 protein Pfl01_3711.